Consider the following 166-residue polypeptide: NAD(P)H-quinone oxidoreductase subunit I, chloroplastic (166 aa).

2 consecutive 4Fe-4S ferredoxin-type domains span residues 55–84 (GRIHFEFDKCIACEVCVRVCPIDLPVVDWK) and 95–124 (LNYSIDFGICIFCGNCVEYCPTNCLSMTEE). Residues Cys-64, Cys-67, Cys-70, Cys-74, Cys-104, Cys-107, Cys-110, and Cys-114 each contribute to the [4Fe-4S] cluster site.

The protein belongs to the complex I 23 kDa subunit family. In terms of assembly, NDH is composed of at least 16 different subunits, 5 of which are encoded in the nucleus. [4Fe-4S] cluster serves as cofactor.

It is found in the plastid. The protein resides in the chloroplast thylakoid membrane. It catalyses the reaction a plastoquinone + NADH + (n+1) H(+)(in) = a plastoquinol + NAD(+) + n H(+)(out). It carries out the reaction a plastoquinone + NADPH + (n+1) H(+)(in) = a plastoquinol + NADP(+) + n H(+)(out). Its function is as follows. NDH shuttles electrons from NAD(P)H:plastoquinone, via FMN and iron-sulfur (Fe-S) centers, to quinones in the photosynthetic chain and possibly in a chloroplast respiratory chain. The immediate electron acceptor for the enzyme in this species is believed to be plastoquinone. Couples the redox reaction to proton translocation, and thus conserves the redox energy in a proton gradient. The chain is NAD(P)H-quinone oxidoreductase subunit I, chloroplastic from Sigesbeckia blakei.